A 77-amino-acid polypeptide reads, in one-letter code: Putative membrane protein insertion efficiency factor (77 aa).

The protein belongs to the UPF0161 family.

The protein resides in the cell membrane. Functionally, could be involved in insertion of integral membrane proteins into the membrane. This chain is Putative membrane protein insertion efficiency factor, found in Geobacillus sp. (strain WCH70).